The sequence spans 459 residues: Antizyme inhibitor 2 (459 aa).

The tract at residues 117–140 (QVAQIKYAAKHGVRLLSFDNEVEL) is necessary for polyamine uptake stimulation.

This sequence belongs to the Orn/Lys/Arg decarboxylase class-II family. ODC antizyme inhibitor subfamily. As to quaternary structure, monomer. Interacts with OAZ1, OAZ2 and OAZ3; this interaction disrupts the interaction between the antizyme and ODC1. Does not form a heterodimer with ODC1. Post-translationally, ubiquitinated, leading to its proteasomal degradation; a process that is reduced in presence of antizymes. May also be degraded through the lysosomal degradative pathway in a proteasomal-independent manner. As to expression, expressed in the medulla and chromaffin cells of the adrenal gland. Expressed in the Langerhans islets of the pancreas. Expressed in the inner part of the seminiferous tubules and in spermatozoa located in the lumen of the epididymis of the testis. Expressed in the cortex, hippocampus and cerebellum of the brain. Expressed in normal and neoplastic mast cells (MC) (at protein level). Expressed in testis, pancreas and brain. Expressed throughout the differentiation process from spermatids to spermatozoa in the inner part of the seminiferous tubules. Expressed in the kidney: expressed in the superficial (Cs) and the deep layer (Cd) of the cortex region and in the outer stripe (OS), inner stripe (IS) and the inner medulla papilla (IM) of the medulla region.

The protein resides in the nucleus. It localises to the cytoplasm. The protein localises to the perinuclear region. Its subcellular location is the membrane. It is found in the cytoplasmic vesicle. The protein resides in the endoplasmic reticulum-Golgi intermediate compartment. It localises to the golgi apparatus. The protein localises to the cis-Golgi network. Its subcellular location is the trans-Golgi network. It is found in the cytoplasmic granule. The protein resides in the cell projection. It localises to the axon. The protein localises to the dendrite. Its subcellular location is the perikaryon. Antizyme inhibitor (AZI) protein that positively regulates ornithine decarboxylase (ODC) activity and polyamine uptake. AZI is an enzymatically inactive ODC homolog that counteracts the negative effect of ODC antizymes (AZs) OAZ1, OAZ2 and OAZ3 on ODC activity by competing with ODC for antizyme-binding. Inhibits antizyme-dependent ODC degradation and releases ODC monomers from their inactive complex with antizymes, leading to formation of the catalytically active ODC homodimer and restoring polyamine production. Participates in the morphological integrity of the trans-Golgi network (TGN) and functions as a regulator of intracellular secretory vesicle trafficking. This chain is Antizyme inhibitor 2 (Azin2), found in Mus musculus (Mouse).